Here is a 533-residue protein sequence, read N- to C-terminus: Lysine--tRNA ligase (533 aa).

The 'HIGH' region motif lies at 28–36 (PSGHIHIGN). Residues 278-282 (PMSSS) carry the 'KMSKS' region motif.

The protein belongs to the class-I aminoacyl-tRNA synthetase family.

The protein resides in the cytoplasm. It carries out the reaction tRNA(Lys) + L-lysine + ATP = L-lysyl-tRNA(Lys) + AMP + diphosphate. This is Lysine--tRNA ligase (lysS) from Methanococcus maripaludis (strain DSM 14266 / JCM 13030 / NBRC 101832 / S2 / LL).